Reading from the N-terminus, the 137-residue chain is Large ribosomal subunit protein uL16 (137 aa).

This sequence belongs to the universal ribosomal protein uL16 family. In terms of assembly, part of the 50S ribosomal subunit.

Functionally, binds 23S rRNA and is also seen to make contacts with the A and possibly P site tRNAs. The chain is Large ribosomal subunit protein uL16 from Thioalkalivibrio sulfidiphilus (strain HL-EbGR7).